We begin with the raw amino-acid sequence, 181 residues long: Oligoribonuclease (181 aa).

An Exonuclease domain is found at 8–171; sequence LIWIDMEMTG…ADIYDSIEEL (164 aa). Y129 is an active-site residue.

This sequence belongs to the oligoribonuclease family.

Its subcellular location is the cytoplasm. Its function is as follows. 3'-to-5' exoribonuclease specific for small oligoribonucleotides. The polypeptide is Oligoribonuclease (Nitrosomonas europaea (strain ATCC 19718 / CIP 103999 / KCTC 2705 / NBRC 14298)).